Reading from the N-terminus, the 120-residue chain is Ribonuclease P protein component (120 aa).

It belongs to the RnpA family. Consists of a catalytic RNA component (M1 or rnpB) and a protein subunit.

It catalyses the reaction Endonucleolytic cleavage of RNA, removing 5'-extranucleotides from tRNA precursor.. In terms of biological role, RNaseP catalyzes the removal of the 5'-leader sequence from pre-tRNA to produce the mature 5'-terminus. It can also cleave other RNA substrates such as 4.5S RNA. The protein component plays an auxiliary but essential role in vivo by binding to the 5'-leader sequence and broadening the substrate specificity of the ribozyme. The polypeptide is Ribonuclease P protein component (Chlamydia trachomatis serovar L2 (strain ATCC VR-902B / DSM 19102 / 434/Bu)).